The following is a 1373-amino-acid chain: MAQQTFTGRKRVRKFFGHIREVAEMPNLIEVQKASYDQFLMVDEPVGGRLDEGLQAVFRSVFPISDFSNTSMLEFVRYEFEPPKYDVDECRQRGMTYAAPLKVTLRLIVFDIDEETGARSVKDIKEQDVYMGDIPLMTMNGTFVVNGTERVIVSQMHRSPGVFFDHDKGKTHSSGKLLFAARVIPYRGSWLDIEFDAKDIVFARIDRRRKIPVTSLMFALGLDGEEILSTFYKKIQYKKIKEGWRVPFDSNRFRGYSTINDLIDADTGKVVLEAGKKLTVRAARQLQEKGLKALRLSDEELVGNYLAEDLVNPKTGEIYAEAGEEITEKSLKGLNEQGYKELPLLDIDHVNIGAYIRNTLAADKNMTREDALFDIYRVMRPGEPPTIDSAQNMFQSLFFDSERYDLSAVGRVKMNMRLELDAPDTHRTLRKEDILAVIKTLVGLRDGRGEIDDIDHLGNRRVRSVGELMENQYRIGLLRMERAIKERMSSVDIDTVMPQDLINAKPAAAAVREFFGSSQLSQFMDQTNPLSEITHKRRLSALGPGGLTRERAGFEVRDVHPTHYGRICPIETPEGPNIGLINSLATFARVNKYGFVETPYRRCKDGRVTDEVVYLSAMEEGRYSVAQANVQLDPKGRFVEDLIVCRDGGTRDVVLIPADKVDFMDVSPKQLVSVAAALIPFLENDDANRALMGSNMQRQAVPLVRAEAPFVGTGMEGVVARDSGAAIAARRTGVIDQIDATRIVIRATDDLDPTKSGVDIYRLMKYQRSNQSTCINQRPLVKVGDMVAKGDIIADGPSTDLGELALGRNVLVAFMPWNGYNFEDSILLSERIVKDDVFTSIHIEEFEVMARDTKLGPEEITRDIPNVSEEALKNLDEAGIVYIGAEVRAGDILVGKITPKGESPMTPEEKLLRAIFGEKASDVRDTSLRVPPGVQGTIVEVRVFNRHGVDKDERALAIEREEIERLAKDRDDEQAILDRNVYGRLADLLENRQGIAGPKGFKKDTKITRAVIEEYPKSQWWLFASPNDKLMAEIEAMRKQYDESKKGLEQRFLDKVEKLQRGDELPPGVMKMVKVFVAVKRKIQPGDKMAGRHGNKGVVSKIVPIEDMPFLEDGTHADIVLNPLGVPSRMNVGQILETHLGWACAGLGKRIGQTIDAYYQKQDLKPMRETLRKIYGEDETIKSLNDAELLELARNLKPGVPIATPVFDGAKEADIEEMLKLAGLDASGQSTVYDGRTGDTFDRKVTVGYIYMLKLHHLVDDKIHARSIGPYSLVTQQPLGGKAQFGGQRFGEMEVWALEAYGAAYTLQEMLTVKSDDVAGRTKVYEAIVRGDDTFEAGIPESFNVLVKEMRSLGLNVDLHNSKLATPTSEAAE.

It belongs to the RNA polymerase beta chain family. In terms of assembly, the RNAP catalytic core consists of 2 alpha, 1 beta, 1 beta' and 1 omega subunit. When a sigma factor is associated with the core the holoenzyme is formed, which can initiate transcription.

It carries out the reaction RNA(n) + a ribonucleoside 5'-triphosphate = RNA(n+1) + diphosphate. DNA-dependent RNA polymerase catalyzes the transcription of DNA into RNA using the four ribonucleoside triphosphates as substrates. The protein is DNA-directed RNA polymerase subunit beta of Rhodopseudomonas palustris (strain BisB18).